We begin with the raw amino-acid sequence, 330 residues long: uncharacterized protein (330 aa).

ATP is bound at residue 125–132 (GPPGCGKT).

Belongs to the AAA ATPase family.

This is an uncharacterized protein from Sinorhizobium fredii (strain NBRC 101917 / NGR234).